The sequence spans 362 residues: Aminomethyltransferase (362 aa).

The protein belongs to the GcvT family. As to quaternary structure, the glycine cleavage system is composed of four proteins: P, T, L and H.

The catalysed reaction is N(6)-[(R)-S(8)-aminomethyldihydrolipoyl]-L-lysyl-[protein] + (6S)-5,6,7,8-tetrahydrofolate = N(6)-[(R)-dihydrolipoyl]-L-lysyl-[protein] + (6R)-5,10-methylene-5,6,7,8-tetrahydrofolate + NH4(+). The glycine cleavage system catalyzes the degradation of glycine. The chain is Aminomethyltransferase from Porphyromonas gingivalis (strain ATCC 33277 / DSM 20709 / CIP 103683 / JCM 12257 / NCTC 11834 / 2561).